We begin with the raw amino-acid sequence, 182 residues long: MKLQLALVLCGLTLALGQIVPRSSWCPVPISPRMPRLMVPVRLIIIHHTVTAPCFNPHQCQLVLRQIRADHMRRKFRDIGYNFLIGGDGRIYEGLGFGIRGEHAPRYNSQSIGIAFIGNFQTGLPPSQMLQAARTLIQIAVQRRQVSPNYSVVGHCQTKATACPGIHLLNELKKWPNWRPKP.

The N-terminal stretch at 1 to 17 (MKLQLALVLCGLTLALG) is a signal peptide. The N-acetylmuramoyl-L-alanine amidase domain occupies 40–165 (PVRLIIIHHT…CQTKATACPG (126 aa)). Position 47 (H47) interacts with Zn(2+). An intrachain disulfide couples C54 to C60. A glycan (N-linked (GlcNAc...) asparagine) is linked at N149. Zn(2+) contacts are provided by H155 and C163.

It belongs to the N-acetylmuramoyl-L-alanine amidase 2 family. Requires Zn(2+) as cofactor.

Its subcellular location is the secreted. It carries out the reaction Hydrolyzes the link between N-acetylmuramoyl residues and L-amino acid residues in certain cell-wall glycopeptides.. In terms of biological role, N-acetylmuramyl-L-alanine amidase involved in innate immunity by degrading bacterial peptidoglycans (PGN). Probably plays a scavenger role by digesting biologically active PGN into biologically inactive fragments. Has no direct bacteriolytic activity. This chain is Peptidoglycan-recognition protein SB2 (PGRP-SB2), found in Drosophila melanogaster (Fruit fly).